The sequence spans 72 residues: Translation initiation factor IF-1 (72 aa).

The region spanning methionine 1–lysine 72 is the S1-like domain.

This sequence belongs to the IF-1 family. Component of the 30S ribosomal translation pre-initiation complex which assembles on the 30S ribosome in the order IF-2 and IF-3, IF-1 and N-formylmethionyl-tRNA(fMet); mRNA recruitment can occur at any time during PIC assembly.

Its subcellular location is the cytoplasm. One of the essential components for the initiation of protein synthesis. Stabilizes the binding of IF-2 and IF-3 on the 30S subunit to which N-formylmethionyl-tRNA(fMet) subsequently binds. Helps modulate mRNA selection, yielding the 30S pre-initiation complex (PIC). Upon addition of the 50S ribosomal subunit IF-1, IF-2 and IF-3 are released leaving the mature 70S translation initiation complex. In Nitrosomonas eutropha (strain DSM 101675 / C91 / Nm57), this protein is Translation initiation factor IF-1.